The following is a 495-amino-acid chain: Probable cytosol aminopeptidase (495 aa).

Mn(2+)-binding residues include lysine 264 and aspartate 269. Lysine 276 is an active-site residue. The Mn(2+) site is built by aspartate 287, aspartate 346, and glutamate 348. Residue arginine 350 is part of the active site.

Belongs to the peptidase M17 family. Mn(2+) is required as a cofactor.

It is found in the cytoplasm. The enzyme catalyses Release of an N-terminal amino acid, Xaa-|-Yaa-, in which Xaa is preferably Leu, but may be other amino acids including Pro although not Arg or Lys, and Yaa may be Pro. Amino acid amides and methyl esters are also readily hydrolyzed, but rates on arylamides are exceedingly low.. It carries out the reaction Release of an N-terminal amino acid, preferentially leucine, but not glutamic or aspartic acids.. Functionally, presumably involved in the processing and regular turnover of intracellular proteins. Catalyzes the removal of unsubstituted N-terminal amino acids from various peptides. This chain is Probable cytosol aminopeptidase, found in Geotalea uraniireducens (strain Rf4) (Geobacter uraniireducens).